The chain runs to 444 residues: Phosphoglucosamine mutase (444 aa).

Serine 103 acts as the Phosphoserine intermediate in catalysis. Residues serine 103, aspartate 241, aspartate 243, and aspartate 245 each contribute to the Mg(2+) site. Serine 103 bears the Phosphoserine mark.

Belongs to the phosphohexose mutase family. Mg(2+) serves as cofactor. Activated by phosphorylation.

The catalysed reaction is alpha-D-glucosamine 1-phosphate = D-glucosamine 6-phosphate. Its function is as follows. Catalyzes the conversion of glucosamine-6-phosphate to glucosamine-1-phosphate. The sequence is that of Phosphoglucosamine mutase from Deinococcus radiodurans (strain ATCC 13939 / DSM 20539 / JCM 16871 / CCUG 27074 / LMG 4051 / NBRC 15346 / NCIMB 9279 / VKM B-1422 / R1).